The primary structure comprises 172 residues: Crossover junction endodeoxyribonuclease RuvC (172 aa).

Active-site residues include aspartate 7, glutamate 68, and aspartate 140. 3 residues coordinate Mg(2+): aspartate 7, glutamate 68, and aspartate 140.

This sequence belongs to the RuvC family. In terms of assembly, homodimer which binds Holliday junction (HJ) DNA. The HJ becomes 2-fold symmetrical on binding to RuvC with unstacked arms; it has a different conformation from HJ DNA in complex with RuvA. In the full resolvosome a probable DNA-RuvA(4)-RuvB(12)-RuvC(2) complex forms which resolves the HJ. Requires Mg(2+) as cofactor.

The protein resides in the cytoplasm. It catalyses the reaction Endonucleolytic cleavage at a junction such as a reciprocal single-stranded crossover between two homologous DNA duplexes (Holliday junction).. Functionally, the RuvA-RuvB-RuvC complex processes Holliday junction (HJ) DNA during genetic recombination and DNA repair. Endonuclease that resolves HJ intermediates. Cleaves cruciform DNA by making single-stranded nicks across the HJ at symmetrical positions within the homologous arms, yielding a 5'-phosphate and a 3'-hydroxyl group; requires a central core of homology in the junction. The consensus cleavage sequence is 5'-(A/T)TT(C/G)-3'. Cleavage occurs on the 3'-side of the TT dinucleotide at the point of strand exchange. HJ branch migration catalyzed by RuvA-RuvB allows RuvC to scan DNA until it finds its consensus sequence, where it cleaves and resolves the cruciform DNA. This chain is Crossover junction endodeoxyribonuclease RuvC, found in Polynucleobacter asymbioticus (strain DSM 18221 / CIP 109841 / QLW-P1DMWA-1) (Polynucleobacter necessarius subsp. asymbioticus).